The chain runs to 235 residues: Isoprenyl transferase (235 aa).

Residue Asp21 is part of the active site. Residue Asp21 coordinates Mg(2+). Substrate contacts are provided by residues 22-25, Trp26, Lys34, His38, and 66-68; these read GNAR and SSE. The active-site Proton acceptor is the Asn69. Substrate contacts are provided by residues Trp70, Arg72, Arg183, and 189-191; that span reads RIS. A Mg(2+)-binding site is contributed by Glu202.

Belongs to the UPP synthase family. As to quaternary structure, homodimer. Mg(2+) serves as cofactor.

Catalyzes the condensation of isopentenyl diphosphate (IPP) with allylic pyrophosphates generating different type of terpenoids. This Rickettsia felis (strain ATCC VR-1525 / URRWXCal2) (Rickettsia azadi) protein is Isoprenyl transferase.